Here is a 318-residue protein sequence, read N- to C-terminus: Lymphatic vessel endothelial hyaluronic acid receptor 1 (318 aa).

A signal peptide spans 1–23 (MLQHTSLVLLLASIWTTRHPVQG). Topologically, residues 24–234 (ADLVQDLSIS…EAAGFGGVPT (211 aa)) are extracellular. Residues 39–129 (GVALVGRNKN…SQKFKAYCHN (91 aa)) enclose the Link domain. An N-linked (GlcNAc...) asparagine glycan is attached at N52. 2 disulfides stabilise this stretch: C60-C127 and C84-C105. A glycan (N-linked (GlcNAc...) asparagine) is linked at N129. The chain crosses the membrane as a helical span at residues 235–255 (ALLVLALLFFGAAAVLAVCYV). The Cytoplasmic segment spans residues 256–318 (KRYVKAFPFT…TTVRCLEAEV (63 aa)). Residues 284-305 (ADDVNANEESKKTIKNPEEAKS) are compositionally biased toward basic and acidic residues. Residues 284–318 (ADDVNANEESKKTIKNPEEAKSPPKTTVRCLEAEV) are disordered.

In terms of assembly, homodimer; disulfide-linked. Interacts with PDGFB and IGFBP3. Forms a transient ternary complex with PDGFB and PDGFRB in TGN. Post-translationally, O-glycosylated.

It is found in the membrane. Functionally, ligand-specific transporter trafficking between intracellular organelles (TGN) and the plasma membrane. Plays a role in autocrine regulation of cell growth mediated by growth regulators containing cell surface retention sequence binding (CRS). May act as a hyaluronan (HA) transporter, either mediating its uptake for catabolism within lymphatic endothelial cells themselves, or its transport into the lumen of afferent lymphatic vessels for subsequent re-uptake and degradation in lymph nodes. Binds to pericelluar hyaluronan matrices deposited on the surface of leukocytes and facilitates cell adhesion and migration through lymphatic endothelium. This Mus musculus (Mouse) protein is Lymphatic vessel endothelial hyaluronic acid receptor 1 (Lyve1).